A 257-amino-acid polypeptide reads, in one-letter code: 3-methyl-2-oxobutanoate hydroxymethyltransferase (257 aa).

Asp-42 and Asp-86 together coordinate Mg(2+). Residues Asp-42–Ser-43, Asp-86, and Lys-116 each bind 3-methyl-2-oxobutanoate. Glu-118 serves as a coordination point for Mg(2+). Glu-185 functions as the Proton acceptor in the catalytic mechanism.

Belongs to the PanB family. As to quaternary structure, homodecamer; pentamer of dimers. The cofactor is Mg(2+).

It is found in the cytoplasm. The catalysed reaction is 3-methyl-2-oxobutanoate + (6R)-5,10-methylene-5,6,7,8-tetrahydrofolate + H2O = 2-dehydropantoate + (6S)-5,6,7,8-tetrahydrofolate. The protein operates within cofactor biosynthesis; (R)-pantothenate biosynthesis; (R)-pantoate from 3-methyl-2-oxobutanoate: step 1/2. In terms of biological role, catalyzes the reversible reaction in which hydroxymethyl group from 5,10-methylenetetrahydrofolate is transferred onto alpha-ketoisovalerate to form ketopantoate. This is 3-methyl-2-oxobutanoate hydroxymethyltransferase from Prochlorococcus marinus (strain AS9601).